The primary structure comprises 299 residues: Probable transport accessory protein MmpS3 (299 aa).

Positions M1–P72 are disordered. The chain crosses the membrane as a helical span at residues V101 to V121. Positions K128–P139 are enriched in polar residues. Positions K128–Q213 are disordered. Over residues P150–T163 the composition is skewed to pro residues. Residues E164 to V176 are compositionally biased toward low complexity. Positions T177 to A193 are enriched in pro residues.

It belongs to the MmpS family.

Its subcellular location is the cell membrane. The sequence is that of Probable transport accessory protein MmpS3 (mmpS3) from Mycobacterium tuberculosis (strain CDC 1551 / Oshkosh).